Here is a 600-residue protein sequence, read N- to C-terminus: Elongation factor 4 (600 aa).

Residues 7 to 189 (SLIRNFSIIA…ALVQRLPAPT (183 aa)) form the tr-type G domain. GTP contacts are provided by residues 19-24 (DHGKST) and 136-139 (NKID).

It belongs to the TRAFAC class translation factor GTPase superfamily. Classic translation factor GTPase family. LepA subfamily.

Its subcellular location is the cell inner membrane. The catalysed reaction is GTP + H2O = GDP + phosphate + H(+). Its function is as follows. Required for accurate and efficient protein synthesis under certain stress conditions. May act as a fidelity factor of the translation reaction, by catalyzing a one-codon backward translocation of tRNAs on improperly translocated ribosomes. Back-translocation proceeds from a post-translocation (POST) complex to a pre-translocation (PRE) complex, thus giving elongation factor G a second chance to translocate the tRNAs correctly. Binds to ribosomes in a GTP-dependent manner. The protein is Elongation factor 4 of Gluconobacter oxydans (strain 621H) (Gluconobacter suboxydans).